A 156-amino-acid chain; its full sequence is Transcriptional regulator MraZ (156 aa).

SpoVT-AbrB domains are found at residues N7–V54 and V84–R127.

This sequence belongs to the MraZ family. Forms oligomers.

It localises to the cytoplasm. It is found in the nucleoid. This Bacteroides thetaiotaomicron (strain ATCC 29148 / DSM 2079 / JCM 5827 / CCUG 10774 / NCTC 10582 / VPI-5482 / E50) protein is Transcriptional regulator MraZ.